Consider the following 491-residue polypeptide: Glutamyl-tRNA(Gln) amidotransferase subunit A (491 aa).

Catalysis depends on charge relay system residues Lys77 and Ser152. Catalysis depends on Ser176, which acts as the Acyl-ester intermediate.

The protein belongs to the amidase family. GatA subfamily. As to quaternary structure, heterotrimer of A, B and C subunits.

It carries out the reaction L-glutamyl-tRNA(Gln) + L-glutamine + ATP + H2O = L-glutaminyl-tRNA(Gln) + L-glutamate + ADP + phosphate + H(+). In terms of biological role, allows the formation of correctly charged Gln-tRNA(Gln) through the transamidation of misacylated Glu-tRNA(Gln) in organisms which lack glutaminyl-tRNA synthetase. The reaction takes place in the presence of glutamine and ATP through an activated gamma-phospho-Glu-tRNA(Gln). This chain is Glutamyl-tRNA(Gln) amidotransferase subunit A (gatA), found in Chlamydia muridarum (strain MoPn / Nigg).